The following is a 298-amino-acid chain: Acetyl-coenzyme A carboxylase carboxyl transferase subunit beta (298 aa).

The CoA carboxyltransferase N-terminal domain maps to L26 to A295.

Belongs to the AccD/PCCB family. In terms of assembly, acetyl-CoA carboxylase is a heterohexamer composed of biotin carboxyl carrier protein (AccB), biotin carboxylase (AccC) and two subunits each of ACCase subunit alpha (AccA) and ACCase subunit beta (AccD).

The protein localises to the cytoplasm. The catalysed reaction is N(6)-carboxybiotinyl-L-lysyl-[protein] + acetyl-CoA = N(6)-biotinyl-L-lysyl-[protein] + malonyl-CoA. It participates in lipid metabolism; malonyl-CoA biosynthesis; malonyl-CoA from acetyl-CoA: step 1/1. In terms of biological role, component of the acetyl coenzyme A carboxylase (ACC) complex. Biotin carboxylase (BC) catalyzes the carboxylation of biotin on its carrier protein (BCCP) and then the CO(2) group is transferred by the transcarboxylase to acetyl-CoA to form malonyl-CoA. The sequence is that of Acetyl-coenzyme A carboxylase carboxyl transferase subunit beta from Agrobacterium fabrum (strain C58 / ATCC 33970) (Agrobacterium tumefaciens (strain C58)).